Here is a 112-residue protein sequence, read N- to C-terminus: Tyrosine-protein phosphatase 7 (112 aa).

The 112-residue stretch at 1-112 (NNVTIIVMIT…SSPESGPIVV (112 aa)) folds into the Tyrosine-protein phosphatase domain. Substrate is bound at residue aspartate 82.

The protein belongs to the protein-tyrosine phosphatase family.

The catalysed reaction is O-phospho-L-tyrosyl-[protein] + H2O = L-tyrosyl-[protein] + phosphate. This Styela plicata (Wrinkled sea squirt) protein is Tyrosine-protein phosphatase 7 (STY-7).